Reading from the N-terminus, the 150-residue chain is UPF0178 protein ECA0873 (150 aa).

Belongs to the UPF0178 family.

The polypeptide is UPF0178 protein ECA0873 (Pectobacterium atrosepticum (strain SCRI 1043 / ATCC BAA-672) (Erwinia carotovora subsp. atroseptica)).